The following is a 364-amino-acid chain: D-alanine--D-alanine ligase (364 aa).

An ATP-grasp domain is found at 134-347 (RRLACINGLK…YPDLLDELIN (214 aa)). 167–222 (ASEFGWPLFVKPCSLGSSVGIHKANNMDELNAAVADALRYDEEILVEEFIVGREIE) contributes to the ATP binding site. Mg(2+)-binding residues include Asp-300, Glu-314, and Asn-316.

It belongs to the D-alanine--D-alanine ligase family. Requires Mg(2+) as cofactor. It depends on Mn(2+) as a cofactor.

The protein resides in the cytoplasm. The catalysed reaction is 2 D-alanine + ATP = D-alanyl-D-alanine + ADP + phosphate + H(+). It participates in cell wall biogenesis; peptidoglycan biosynthesis. Cell wall formation. The sequence is that of D-alanine--D-alanine ligase from Legionella pneumophila (strain Lens).